The chain runs to 366 residues: Dual-specificity RNA methyltransferase RlmN (366 aa).

The active-site Proton acceptor is the Glu91. Residues 97 to 333 form the Radical SAM core domain; the sequence is EDDRGTLCVS…TTVRKTRGED (237 aa). Cys104 and Cys338 are oxidised to a cystine. Cys111, Cys115, and Cys118 together coordinate [4Fe-4S] cluster. Residues 164-165, Ser196, 218-220, and Asn295 each bind S-adenosyl-L-methionine; these read GE and SLH. Cys338 serves as the catalytic S-methylcysteine intermediate.

The protein belongs to the radical SAM superfamily. RlmN family. The cofactor is [4Fe-4S] cluster.

It is found in the cytoplasm. The catalysed reaction is adenosine(2503) in 23S rRNA + 2 reduced [2Fe-2S]-[ferredoxin] + 2 S-adenosyl-L-methionine = 2-methyladenosine(2503) in 23S rRNA + 5'-deoxyadenosine + L-methionine + 2 oxidized [2Fe-2S]-[ferredoxin] + S-adenosyl-L-homocysteine. The enzyme catalyses adenosine(37) in tRNA + 2 reduced [2Fe-2S]-[ferredoxin] + 2 S-adenosyl-L-methionine = 2-methyladenosine(37) in tRNA + 5'-deoxyadenosine + L-methionine + 2 oxidized [2Fe-2S]-[ferredoxin] + S-adenosyl-L-homocysteine. Specifically methylates position 2 of adenine 2503 in 23S rRNA and position 2 of adenine 37 in tRNAs. m2A2503 modification seems to play a crucial role in the proofreading step occurring at the peptidyl transferase center and thus would serve to optimize ribosomal fidelity. This chain is Dual-specificity RNA methyltransferase RlmN, found in Laribacter hongkongensis (strain HLHK9).